The following is a 218-amino-acid chain: Copper acquisition factor BIM1 (218 aa).

The N-terminal stretch at 1–19 (MFALKSILVTSLITSTALA) is a signal peptide. His-20 and His-65 together coordinate Cu(2+). 3 N-linked (GlcNAc...) asparagine glycosylation sites follow: Asn-87, Asn-91, and Asn-124. Residue Asp-138 coordinates Cu(2+). N-linked (GlcNAc...) asparagine glycans are attached at residues Asn-158 and Asn-170. The disordered stretch occupies residues 160-194 (TCTNDASKASNATSTSSGSATATSAAATSSSSGTS). The segment covering 165 to 194 (ASKASNATSTSSGSATATSAAATSSSSGTS) has biased composition (low complexity). Residue Ser-190 is the site of GPI-anchor amidated serine attachment. Positions 191 to 218 (SGTSGAIKEVVGFGALSLALGIAGLIIL) are cleaved as a propeptide — removed in mature form.

The protein belongs to the X325 family. Interacts with the CUF1-dependent copper transporter CTR1. Requires Cu(2+) as cofactor.

The protein resides in the cell membrane. In terms of biological role, lytic polysaccharide monooxygenase-like protein that has diverged to biological functions other than polysaccharide degradation since it does not perform oxidative cleavage of polysaccharides. Cell surface-bound protein that functions in the copper-accumulation pathway shared by the CUF1-dependent copper transporter CTR1. Involved in maintaining cell wall integrity during copper deficiency. Binds Cu(2+) with an estimated 1:1 stoichiometry and might serve as an extracellular copper ligand. FRE4 and FRE7 metalloreductases probably function together with CTR1 and BIM1 to liberate the Cu(2+) bound to the BIM1 copper-binding site for subsequent import of Cu(+) into the cell by CTR1, via the reduction of BIM1-bound Cu(2+) to Cu(+) to reduce binding affinity for BIM1 but increase affinity for CTR1. Facilitates copper acquisition in the brain of mammalian hosts and acts as a copper-dependent virulence trait in fungal meningitis. While BIM1 plays a critical role in cryptococcal meningitis, at least in part through its role in copper acquisition, it could play additional roles during copper limitation or as a means to invade and colonize host tissues in the brain, by compromising host carbohydrate integrity via its lytic polysaccharide monooxygenase (LPMO) activity, which has still to be determined. The chain is Copper acquisition factor BIM1 from Cryptococcus neoformans var. grubii serotype A (strain H99 / ATCC 208821 / CBS 10515 / FGSC 9487) (Filobasidiella neoformans var. grubii).